The chain runs to 310 residues: UDP-N-acetylenolpyruvoylglucosamine reductase (310 aa).

One can recognise an FAD-binding PCMH-type domain in the interval 30 to 200 (RVGGPAQWLA…VAAEFQLEPG (171 aa)). Arg-179 is an active-site residue. Ser-230 (proton donor) is an active-site residue. Glu-300 is a catalytic residue.

This sequence belongs to the MurB family. Requires FAD as cofactor.

Its subcellular location is the cytoplasm. It carries out the reaction UDP-N-acetyl-alpha-D-muramate + NADP(+) = UDP-N-acetyl-3-O-(1-carboxyvinyl)-alpha-D-glucosamine + NADPH + H(+). It participates in cell wall biogenesis; peptidoglycan biosynthesis. In terms of biological role, cell wall formation. This chain is UDP-N-acetylenolpyruvoylglucosamine reductase, found in Synechococcus sp. (strain WH7803).